Here is a 170-residue protein sequence, read N- to C-terminus: Translationally-controlled tumor protein homolog (170 aa).

Positions 1–170 (MLIYSDIITG…WKHGLKETKV (170 aa)) constitute a TCTP domain.

The protein belongs to the TCTP family.

It is found in the cytoplasm. Its subcellular location is the cytoskeleton. Involved in protein synthesis. Involved in microtubule stabilization. The sequence is that of Translationally-controlled tumor protein homolog from Neurospora crassa (strain ATCC 24698 / 74-OR23-1A / CBS 708.71 / DSM 1257 / FGSC 987).